The chain runs to 743 residues: Cap-specific mRNA (nucleoside-2'-O-)-methyltransferase 2 (743 aa).

The Adrift-type SAM-dependent 2'-O-MTase domain occupies 113–326 (ELCTQAWAKF…LYIVCLDYQA (214 aa)). Residue K121 is part of the active site. S-adenosyl-L-methionine contacts are provided by G152, W171, and D239. D239 is a catalytic residue. K279 functions as the Proton acceptor in the catalytic mechanism.

Its subcellular location is the nucleus. It is found in the cytoplasm. It catalyses the reaction a 5'-end (N(7)-methyl 5'-triphosphoguanosine)-(2'-O-methyl-ribonucleoside)-(ribonucleotide) in mRNA + S-adenosyl-L-methionine = a 5'-end (N(7)-methyl 5'-triphosphoguanosine)-(2'-O-methyl-ribonucleoside)-(2'-O-methyl-ribonucleotide) in mRNA + S-adenosyl-L-homocysteine + H(+). Its function is as follows. S-adenosyl-L-methionine-dependent methyltransferase that mediates mRNA cap2 2'-O-ribose methylation to the 5'-cap structure of mRNAs. Methylates the ribose of the second nucleotide of a m(7)GpppG-capped mRNA and small nuclear RNA (snRNA) (cap0) to produce m(7)GpppRmpNm (cap2). In Danio rerio (Zebrafish), this protein is Cap-specific mRNA (nucleoside-2'-O-)-methyltransferase 2 (cmtr2).